The following is a 241-amino-acid chain: Probable WRKY transcription factor 63 (241 aa).

The interval 56 to 79 (NSPNRQPHHESSSRDMAGLVPQRS) is disordered. The WRKY DNA-binding region spans 97 to 165 (SPNPRLDDGF…YLGQHTCKAF (69 aa)).

This sequence belongs to the WRKY group III family.

The protein resides in the nucleus. In terms of biological role, transcription factor. Interacts specifically with the W box (5'-(T)TGAC[CT]-3'), a frequently occurring elicitor-responsive cis-acting element. In Arabidopsis thaliana (Mouse-ear cress), this protein is Probable WRKY transcription factor 63 (WRKY63).